Here is a 243-residue protein sequence, read N- to C-terminus: 5'-methylthioadenosine/S-adenosylhomocysteine nucleosidase (243 aa).

The active-site Proton acceptor is the Glu12. Substrate is bound by residues Gly78, Met158, and 179-180 (ME). Asp203 serves as the catalytic Proton donor.

It belongs to the PNP/UDP phosphorylase family. MtnN subfamily.

The enzyme catalyses S-adenosyl-L-homocysteine + H2O = S-(5-deoxy-D-ribos-5-yl)-L-homocysteine + adenine. It carries out the reaction S-methyl-5'-thioadenosine + H2O = 5-(methylsulfanyl)-D-ribose + adenine. It catalyses the reaction 5'-deoxyadenosine + H2O = 5-deoxy-D-ribose + adenine. The protein operates within amino-acid biosynthesis; L-methionine biosynthesis via salvage pathway; S-methyl-5-thio-alpha-D-ribose 1-phosphate from S-methyl-5'-thioadenosine (hydrolase route): step 1/2. In terms of biological role, catalyzes the irreversible cleavage of the glycosidic bond in both 5'-methylthioadenosine (MTA) and S-adenosylhomocysteine (SAH/AdoHcy) to adenine and the corresponding thioribose, 5'-methylthioribose and S-ribosylhomocysteine, respectively. Also cleaves 5'-deoxyadenosine, a toxic by-product of radical S-adenosylmethionine (SAM) enzymes, into 5-deoxyribose and adenine. The sequence is that of 5'-methylthioadenosine/S-adenosylhomocysteine nucleosidase from Colwellia psychrerythraea (strain 34H / ATCC BAA-681) (Vibrio psychroerythus).